Consider the following 215-residue polypeptide: Adenylate kinase (215 aa).

An ATP-binding site is contributed by 10 to 15 (GAGKGT). Residues 30-59 (STGDLLRAAVAAGTPLGKEAKAYMDRGELV) are NMP. AMP-binding positions include threonine 31, arginine 36, 57-59 (ELV), 85-88 (GFPR), and glutamine 92. Positions 126 to 163 (GRRTCKSCGQMYNVYYSPSKVEGKCDKCGGELFQRDDD) are LID. Arginine 127 contacts ATP. 4 residues coordinate Zn(2+): cysteine 130, cysteine 133, cysteine 150, and cysteine 153. Positions 160 and 171 each coordinate AMP. Glycine 199 is a binding site for ATP.

The protein belongs to the adenylate kinase family. As to quaternary structure, monomer.

It is found in the cytoplasm. It carries out the reaction AMP + ATP = 2 ADP. The protein operates within purine metabolism; AMP biosynthesis via salvage pathway; AMP from ADP: step 1/1. Catalyzes the reversible transfer of the terminal phosphate group between ATP and AMP. Plays an important role in cellular energy homeostasis and in adenine nucleotide metabolism. The protein is Adenylate kinase of Thermodesulfovibrio yellowstonii (strain ATCC 51303 / DSM 11347 / YP87).